The chain runs to 311 residues: Phosphoglycerate mutase 2 (311 aa).

Substrate is bound by residues 16 to 23, 29 to 30, R73, 126 to 129, K137, 153 to 154, and 243 to 244; these read RHGQSELN, CG, ERHY, RR, and GS. Residue H17 is the Tele-phosphohistidine intermediate of the active site. The active-site Proton donor/acceptor is the E126.

It belongs to the phosphoglycerate mutase family. BPG-dependent PGAM subfamily.

Its subcellular location is the cytoplasm. The catalysed reaction is (2R)-2-phosphoglycerate = (2R)-3-phosphoglycerate. It participates in carbohydrate degradation; glycolysis; pyruvate from D-glyceraldehyde 3-phosphate: step 3/5. Functionally, could be non-functional. The chain is Phosphoglycerate mutase 2 (GPM2) from Saccharomyces cerevisiae (strain ATCC 204508 / S288c) (Baker's yeast).